A 98-amino-acid chain; its full sequence is Large ribosomal subunit protein bL28 (98 aa).

Part of the 50S ribosomal subunit.

In Thermus thermophilus (strain ATCC 27634 / DSM 579 / HB8), this protein is Large ribosomal subunit protein bL28 (rpmB).